Reading from the N-terminus, the 874-residue chain is MKAAEIREKFLKFFESKGHTIVRSSSLVPGNDPTLLFTNSGMVQFKDVFLGAESRPYSRATTAQRSVRAGGKHNDLENVGYTARHHTFFEMLGNFSFGDYFKRDAIHYAWELLTGVYQLPKDKLWVTVYHEDDEAHDIWAKEVGVPVERIIRIGDNKGARYASDNFWQMADVGPCGPCSEIFYDHGPDVWGGPPGSPEEDGDRYIEIWNLVFMQFSRDAQGNMTPLPKQCVDTGMGLERIAAVLQHVHSNYEIDLFQALIKAAGRETGVSDLTNNSLKVIADHIRACSFLIVDGVIPGNEGRGYVLRRIVRRAIRHGYKLGKKGSFFHRMVADLVAQMGDAYPELKEAEQRVTDVLRQEEERFFETIEHGMSILESALADLEAKGGKTLDGELAFKLHDTYGFPLDLTADVCREREVTVDEAAFDEAMARQREQARAAGKFKMAQGLEYSGAKTTFHGYEEIVFDDAKVIALYVDGASVKEVRDGRQAVVVLDHTPFYAESGGQVGDQGVLANASVRFAVSDTLKVQADVVGHHGTLEQGTLKVGDVVKAEIDAVRRARTARNHSATHLMHKALREVLGSHVQQKGSLVDADKTRFDFAHNAPMTDEQIRRVEEIVNAEVLANAPGIVRVMPFDEAVKGGAMALFGEKYGDEVRVLDLGFSRELCGGTHVHRTGDIGLFKIVMEGGVAAGIRRVEAITGDNAVRFVQDLDARINAAAAVLKAQPSELTQRITQVQDQVKSLEKELSALKSKMASSQGDELAGQAIEVGGVHVLAATLEGADVKTLRETVDKLKDKLKSAAIVLASVEGGKVSLIAGVTADASKKVKAGELVNFVAQQVGGKGGGRPDMAQAGGTEPANLPAALAGVKGWVEGQL.

His564, His568, Cys665, and His669 together coordinate Zn(2+).

It belongs to the class-II aminoacyl-tRNA synthetase family. Requires Zn(2+) as cofactor.

The protein localises to the cytoplasm. It carries out the reaction tRNA(Ala) + L-alanine + ATP = L-alanyl-tRNA(Ala) + AMP + diphosphate. Catalyzes the attachment of alanine to tRNA(Ala) in a two-step reaction: alanine is first activated by ATP to form Ala-AMP and then transferred to the acceptor end of tRNA(Ala). Also edits incorrectly charged Ser-tRNA(Ala) and Gly-tRNA(Ala) via its editing domain. The chain is Alanine--tRNA ligase from Paraburkholderia phytofirmans (strain DSM 17436 / LMG 22146 / PsJN) (Burkholderia phytofirmans).